A 351-amino-acid polypeptide reads, in one-letter code: UDP-3-O-acylglucosamine N-acyltransferase 1 (351 aa).

The active-site Proton acceptor is the histidine 237.

Belongs to the transferase hexapeptide repeat family. LpxD subfamily. As to quaternary structure, homotrimer.

It carries out the reaction a UDP-3-O-[(3R)-3-hydroxyacyl]-alpha-D-glucosamine + a (3R)-hydroxyacyl-[ACP] = a UDP-2-N,3-O-bis[(3R)-3-hydroxyacyl]-alpha-D-glucosamine + holo-[ACP] + H(+). It participates in bacterial outer membrane biogenesis; LPS lipid A biosynthesis. Catalyzes the N-acylation of UDP-3-O-acylglucosamine using 3-hydroxyacyl-ACP as the acyl donor. Is involved in the biosynthesis of lipid A, a phosphorylated glycolipid that anchors the lipopolysaccharide to the outer membrane of the cell. This Legionella pneumophila (strain Paris) protein is UDP-3-O-acylglucosamine N-acyltransferase 1.